The sequence spans 286 residues: Bifunctional protein FolD (286 aa).

NADP(+) is bound by residues 166-168 and Ile-232; that span reads GAS.

This sequence belongs to the tetrahydrofolate dehydrogenase/cyclohydrolase family. In terms of assembly, homodimer.

It catalyses the reaction (6R)-5,10-methylene-5,6,7,8-tetrahydrofolate + NADP(+) = (6R)-5,10-methenyltetrahydrofolate + NADPH. It carries out the reaction (6R)-5,10-methenyltetrahydrofolate + H2O = (6R)-10-formyltetrahydrofolate + H(+). It functions in the pathway one-carbon metabolism; tetrahydrofolate interconversion. In terms of biological role, catalyzes the oxidation of 5,10-methylenetetrahydrofolate to 5,10-methenyltetrahydrofolate and then the hydrolysis of 5,10-methenyltetrahydrofolate to 10-formyltetrahydrofolate. The polypeptide is Bifunctional protein FolD (Shewanella denitrificans (strain OS217 / ATCC BAA-1090 / DSM 15013)).